The chain runs to 196 residues: SPRY domain-containing protein 7 (196 aa).

The residue at position 2 (Ala2) is an N-acetylalanine. The 183-residue stretch at Ala2–Pro184 folds into the B30.2/SPRY domain.

This Mus musculus (Mouse) protein is SPRY domain-containing protein 7 (Spryd7).